The chain runs to 618 residues: Glutathione-regulated potassium-efflux system protein (618 aa).

12 helical membrane passes run 6–26 (NPEL…VPLF), 32–52 (GSVL…FGIV), 55–75 (PTAV…IIGL), 94–114 (LLQV…LLGL), 118–138 (VSFI…MQSL), 152–172 (VIST…SVAF), 186–206 (WVSI…GKWL), 227–247 (ALLV…SMAM), 274–294 (GLLL…HLVF), 298–318 (ILLL…VYII), 336–356 (MAHG…AEVI), and 362–382 (ATFT…AQIA). In terms of domain architecture, RCK N-terminal spans 409-525 (EDNVLVIGFG…LIKQDVDFIV (117 aa)).

Belongs to the monovalent cation:proton antiporter 2 (CPA2) transporter (TC 2.A.37) family.

It is found in the cell inner membrane. Its function is as follows. Transport system that facilitate potassium-efflux, possibly by potassium-proton antiport. The protein is Glutathione-regulated potassium-efflux system protein (kefBC) of Haemophilus influenzae (strain ATCC 51907 / DSM 11121 / KW20 / Rd).